A 140-amino-acid chain; its full sequence is Peptidyl-prolyl cis-trans isomerase FKBP2 (140 aa).

Residues 1 to 22 form the signal peptide; the sequence is MRLSWILTILSICLSALAAATG. The 89-residue stretch at 47–135 folds into the PPIase FKBP-type domain; it reads GDVLHMHYTG…VFEVELLKIE (89 aa). The Prevents secretion from ER motif lies at 137-140; the sequence is RSEL.

Belongs to the FKBP-type PPIase family. FKBP2 subfamily. Interacts with ARFGEF1/BIG1 and the C-terminal of EPB41L2.

It localises to the endoplasmic reticulum membrane. The enzyme catalyses [protein]-peptidylproline (omega=180) = [protein]-peptidylproline (omega=0). Its activity is regulated as follows. Inhibited by both FK506 and rapamycin. Functionally, PPIases accelerate the folding of proteins. It catalyzes the cis-trans isomerization of proline imidic peptide bonds in oligopeptides. This is Peptidyl-prolyl cis-trans isomerase FKBP2 (Fkbp2) from Mus musculus (Mouse).